The primary structure comprises 119 residues: Small ribosomal subunit protein uS13m (119 aa).

Belongs to the universal ribosomal protein uS13 family. Part of the small ribosomal subunit.

The protein resides in the mitochondrion. In terms of biological role, located at the top of the head of the small subunit, it contacts several helices of the small subunit rRNA. In Acanthamoeba castellanii (Amoeba), this protein is Small ribosomal subunit protein uS13m (RPS13).